The chain runs to 112 residues: Phosphoribosyl-ATP pyrophosphatase (112 aa).

This sequence belongs to the PRA-PH family.

Its subcellular location is the cytoplasm. It carries out the reaction 1-(5-phospho-beta-D-ribosyl)-ATP + H2O = 1-(5-phospho-beta-D-ribosyl)-5'-AMP + diphosphate + H(+). It participates in amino-acid biosynthesis; L-histidine biosynthesis; L-histidine from 5-phospho-alpha-D-ribose 1-diphosphate: step 2/9. In Chromohalobacter salexigens (strain ATCC BAA-138 / DSM 3043 / CIP 106854 / NCIMB 13768 / 1H11), this protein is Phosphoribosyl-ATP pyrophosphatase.